A 111-amino-acid polypeptide reads, in one-letter code: Ribosome-binding factor A (111 aa).

The protein belongs to the RbfA family. As to quaternary structure, monomer. Binds 30S ribosomal subunits, but not 50S ribosomal subunits or 70S ribosomes.

The protein localises to the cytoplasm. Functionally, one of several proteins that assist in the late maturation steps of the functional core of the 30S ribosomal subunit. Associates with free 30S ribosomal subunits (but not with 30S subunits that are part of 70S ribosomes or polysomes). Required for efficient processing of 16S rRNA. May interact with the 5'-terminal helix region of 16S rRNA. The chain is Ribosome-binding factor A from Helicobacter pylori (strain Shi470).